A 246-amino-acid chain; its full sequence is MTAVESGSKVLRMKESDAQKLLAMRCHIGTRNQSSAMKKYIYGRTAEGSHIIDLHMMWEKLILAARVIAAVENPKDVCVCSSRLYGTRAIYKFSQHVGTSFHGGRFIPGTFTNQIQKKFVQPRVLVVTDPRTDHQAIREASLVNIPVIALCDTDAPLEYVDIAIPCNNRGIKSIGMMYWLLAREVLRLRGTIVRSVPWEEKVDLFFYRDPNEAAEEKAAAAAAAPAAEAEEGFGWVERNDDNAWEA.

It belongs to the universal ribosomal protein uS2 family. Component of the small ribosomal subunit. Mature ribosomes consist of a small (40S) and a large (60S) subunit. The 40S subunit contains about 33 different proteins and 1 molecule of RNA (18S). The 60S subunit contains about 49 different proteins and 3 molecules of RNA (25S, 5.8S and 5S). Interacts with ribosomal protein S21.

It is found in the cytoplasm. In terms of biological role, required for the assembly and/or stability of the 40S ribosomal subunit. Required for the processing of the 20S rRNA-precursor to mature 18S rRNA in a late step of the maturation of 40S ribosomal subunits. The sequence is that of Small ribosomal subunit protein uS2 from Leishmania infantum.